Reading from the N-terminus, the 450-residue chain is 23S rRNA (uracil(1939)-C(5))-methyltransferase RlmD (450 aa).

Positions 12 to 70 constitute a TRAM domain; the sequence is SKQLSAKLSLSVNQLDHLGAGIAQHQGKVVFIPGALPDETVTVQFTEQKKNYARAKLIK. The [4Fe-4S] cluster site is built by Cys-83, Cys-89, Cys-92, and Cys-171. S-adenosyl-L-methionine-binding residues include Gln-283, Phe-312, Asn-317, Glu-333, Asp-360, and Asp-380. The Nucleophile role is filled by Cys-406.

This sequence belongs to the class I-like SAM-binding methyltransferase superfamily. RNA M5U methyltransferase family. RlmD subfamily.

The enzyme catalyses uridine(1939) in 23S rRNA + S-adenosyl-L-methionine = 5-methyluridine(1939) in 23S rRNA + S-adenosyl-L-homocysteine + H(+). Catalyzes the formation of 5-methyl-uridine at position 1939 (m5U1939) in 23S rRNA. This Shewanella baltica (strain OS155 / ATCC BAA-1091) protein is 23S rRNA (uracil(1939)-C(5))-methyltransferase RlmD.